The chain runs to 454 residues: tRNA modification GTPase MnmE (454 aa).

Residues R23, E80, and K120 each contribute to the (6S)-5-formyl-5,6,7,8-tetrahydrofolate site. The region spanning 216-377 is the TrmE-type G domain; sequence GMKVVIAGRP…LRDHLKQSMG (162 aa). N226 contacts K(+). GTP contacts are provided by residues 226-231, 245-251, 270-273, 335-338, and 358-360; these read NAGKSS, TAIAGTT, DTAG, NKAD, and SAR. S230 provides a ligand contact to Mg(2+). Residues T245, I247, and T250 each coordinate K(+). T251 contributes to the Mg(2+) binding site. (6S)-5-formyl-5,6,7,8-tetrahydrofolate is bound at residue K454.

Belongs to the TRAFAC class TrmE-Era-EngA-EngB-Septin-like GTPase superfamily. TrmE GTPase family. In terms of assembly, homodimer. Heterotetramer of two MnmE and two MnmG subunits. It depends on K(+) as a cofactor.

The protein resides in the cytoplasm. Exhibits a very high intrinsic GTPase hydrolysis rate. Involved in the addition of a carboxymethylaminomethyl (cmnm) group at the wobble position (U34) of certain tRNAs, forming tRNA-cmnm(5)s(2)U34. The sequence is that of tRNA modification GTPase MnmE from Pectobacterium atrosepticum (strain SCRI 1043 / ATCC BAA-672) (Erwinia carotovora subsp. atroseptica).